The chain runs to 448 residues: tRNA(Ile)-lysidine synthase (448 aa).

Position 30 to 35 (30 to 35) interacts with ATP; the sequence is GGGADS.

The protein belongs to the tRNA(Ile)-lysidine synthase family.

It is found in the cytoplasm. It catalyses the reaction cytidine(34) in tRNA(Ile2) + L-lysine + ATP = lysidine(34) in tRNA(Ile2) + AMP + diphosphate + H(+). Ligates lysine onto the cytidine present at position 34 of the AUA codon-specific tRNA(Ile) that contains the anticodon CAU, in an ATP-dependent manner. Cytidine is converted to lysidine, thus changing the amino acid specificity of the tRNA from methionine to isoleucine. In Idiomarina loihiensis (strain ATCC BAA-735 / DSM 15497 / L2-TR), this protein is tRNA(Ile)-lysidine synthase.